The primary structure comprises 468 residues: Fibrinogen beta chain (468 aa).

Q1 is subject to Pyrrolidone carboxylic acid. Residues 1-10 are compositionally biased toward acidic residues; sequence QFPTDYDEGQ. Positions 1–54 are disordered; the sequence is QFPTDYDEGQDDRPKVGLGARGHRPYDKKKEEAPSLRPVPPPISGGGYRARPAT. O-linked (GalNAc...) threonine glycosylation is present at T4. Y6 is subject to Sulfotyrosine. The span at 24-34 shows a compositional bias: basic and acidic residues; that stretch reads RPYDKKKEEAP. Positions 88 to 204 form a coiled coil; the sequence is KLQDTLVRQE…TQMEYCRTPC (117 aa). Intrachain disulfides connect C208-C293 and C218-C247. Residues 209–465 form the Fibrinogen C-terminal domain; that stretch reads NIPVVSGKEC…KMSMKIRPYF (257 aa). N371 carries an N-linked (GlcNAc...) asparagine glycan. Residues C401 and C414 are joined by a disulfide bond.

As to quaternary structure, heterohexamer; disulfide linked. Contains 2 sets of 3 non-identical chains (alpha, beta and gamma). The 2 heterotrimers are in head to head conformation with the N-termini in a small central domain. In terms of processing, conversion of fibrinogen to fibrin is triggered by thrombin, which cleaves fibrinopeptides A and B from alpha and beta chains, and thus exposes the N-terminal polymerization sites responsible for the formation of the soft clot. The soft clot is converted into the hard clot by factor XIIIA which catalyzes the epsilon-(gamma-glutamyl)lysine cross-linking between gamma chains (stronger) and between alpha chains (weaker) of different monomers. In terms of tissue distribution, detected in blood plasma (at protein level).

It localises to the secreted. Cleaved by the protease thrombin to yield monomers which, together with fibrinogen alpha (FGA) and fibrinogen gamma (FGG), polymerize to form an insoluble fibrin matrix. Fibrin has a major function in hemostasis as one of the primary components of blood clots. In addition, functions during the early stages of wound repair to stabilize the lesion and guide cell migration during re-epithelialization. Was originally thought to be essential for platelet aggregation, based on in vitro studies using anticoagulated blood. However subsequent studies have shown that it is not absolutely required for thrombus formation in vivo. Enhances expression of SELP in activated platelets. Maternal fibrinogen is essential for successful pregnancy. Fibrin deposition is also associated with infection, where it protects against IFNG-mediated hemorrhage. May also facilitate the antibacterial immune response via both innate and T-cell mediated pathways. The polypeptide is Fibrinogen beta chain (FGB) (Bos taurus (Bovine)).